A 361-amino-acid chain; its full sequence is Phosphoserine aminotransferase (361 aa).

An L-glutamate-binding site is contributed by Arg-43. Residues 77-78, Trp-103, Thr-152, Asp-172, and Gln-195 contribute to the pyridoxal 5'-phosphate site; that span reads AS. An N6-(pyridoxal phosphate)lysine modification is found at Lys-196. Position 237–238 (237–238) interacts with pyridoxal 5'-phosphate; it reads NT.

It belongs to the class-V pyridoxal-phosphate-dependent aminotransferase family. SerC subfamily. Homodimer. Pyridoxal 5'-phosphate is required as a cofactor.

The protein resides in the cytoplasm. It catalyses the reaction O-phospho-L-serine + 2-oxoglutarate = 3-phosphooxypyruvate + L-glutamate. The enzyme catalyses 4-(phosphooxy)-L-threonine + 2-oxoglutarate = (R)-3-hydroxy-2-oxo-4-phosphooxybutanoate + L-glutamate. The protein operates within amino-acid biosynthesis; L-serine biosynthesis; L-serine from 3-phospho-D-glycerate: step 2/3. It functions in the pathway cofactor biosynthesis; pyridoxine 5'-phosphate biosynthesis; pyridoxine 5'-phosphate from D-erythrose 4-phosphate: step 3/5. Catalyzes the reversible conversion of 3-phosphohydroxypyruvate to phosphoserine and of 3-hydroxy-2-oxo-4-phosphonooxybutanoate to phosphohydroxythreonine. This chain is Phosphoserine aminotransferase, found in Desulfatibacillum aliphaticivorans.